Consider the following 427-residue polypeptide: Glutamate-1-semialdehyde 2,1-aminomutase (427 aa).

An N6-(pyridoxal phosphate)lysine modification is found at Lys269.

The protein belongs to the class-III pyridoxal-phosphate-dependent aminotransferase family. HemL subfamily. As to quaternary structure, homodimer. Requires pyridoxal 5'-phosphate as cofactor.

It localises to the cytoplasm. The catalysed reaction is (S)-4-amino-5-oxopentanoate = 5-aminolevulinate. The protein operates within porphyrin-containing compound metabolism; protoporphyrin-IX biosynthesis; 5-aminolevulinate from L-glutamyl-tRNA(Glu): step 2/2. This is Glutamate-1-semialdehyde 2,1-aminomutase from Thermus thermophilus (strain ATCC BAA-163 / DSM 7039 / HB27).